The following is a 495-amino-acid chain: Probable cytosol aminopeptidase (495 aa).

Lys-267 and Asp-272 together coordinate Mn(2+). Lys-279 is an active-site residue. Mn(2+)-binding residues include Asp-290, Asp-349, and Glu-351. Arg-353 is a catalytic residue.

This sequence belongs to the peptidase M17 family. Mn(2+) is required as a cofactor.

The protein resides in the cytoplasm. The enzyme catalyses Release of an N-terminal amino acid, Xaa-|-Yaa-, in which Xaa is preferably Leu, but may be other amino acids including Pro although not Arg or Lys, and Yaa may be Pro. Amino acid amides and methyl esters are also readily hydrolyzed, but rates on arylamides are exceedingly low.. It catalyses the reaction Release of an N-terminal amino acid, preferentially leucine, but not glutamic or aspartic acids.. Functionally, presumably involved in the processing and regular turnover of intracellular proteins. Catalyzes the removal of unsubstituted N-terminal amino acids from various peptides. This chain is Probable cytosol aminopeptidase, found in Histophilus somni (strain 2336) (Haemophilus somnus).